Consider the following 624-residue polypeptide: Serine/threonine-protein kinase ppk35 (624 aa).

The region spanning 162-465 is the Protein kinase domain; sequence FDLLVKLGQG…TIEIQKHPFF (304 aa). ATP is bound by residues 168-176 and K191; that span reads LGQGGYGSV. Catalysis depends on D285, which acts as the Proton acceptor. In terms of domain architecture, AGC-kinase C-terminal spans 466 to 548; the sequence is KRLHWNGLRK…KYRPNARKPL (83 aa). The segment covering 545–559 has biased composition (basic residues); that stretch reads RKPLVGRHREKRQLR. Residues 545-617 form a disordered region; sequence RKPLVGRHRE…VHRLLERKGK (73 aa). A compositionally biased stretch (basic and acidic residues) spans 560–574; the sequence is KEKPEKKNNSTKQKD. A compositionally biased stretch (basic residues) spans 596-609; the sequence is SKTKGHKTKSSRVH.

The protein belongs to the protein kinase superfamily. Ser/Thr protein kinase family.

Its subcellular location is the cytoplasm. It is found in the nucleus. It localises to the nucleolus. The enzyme catalyses L-seryl-[protein] + ATP = O-phospho-L-seryl-[protein] + ADP + H(+). The catalysed reaction is L-threonyl-[protein] + ATP = O-phospho-L-threonyl-[protein] + ADP + H(+). Functionally, has a role in meiosis. The chain is Serine/threonine-protein kinase ppk35 (ppk35) from Schizosaccharomyces pombe (strain 972 / ATCC 24843) (Fission yeast).